Here is a 406-residue protein sequence, read N- to C-terminus: Large ribosomal subunit protein uL4z (406 aa).

The disordered stretch occupies residues 56 to 95 (PYAVSKKAGHQTSAESWGTGRAVSRIPRVPGGGTHRAGQA).

Belongs to the universal ribosomal protein uL4 family.

In Arabidopsis thaliana (Mouse-ear cress), this protein is Large ribosomal subunit protein uL4z (RPL4A).